Here is a 204-residue protein sequence, read N- to C-terminus: Urease accessory protein UreG (204 aa).

Residue 11 to 18 coordinates GTP; that stretch reads GPVGAGKT.

The protein belongs to the SIMIBI class G3E GTPase family. UreG subfamily. As to quaternary structure, homodimer. UreD, UreF and UreG form a complex that acts as a GTP-hydrolysis-dependent molecular chaperone, activating the urease apoprotein by helping to assemble the nickel containing metallocenter of UreC. The UreE protein probably delivers the nickel.

It is found in the cytoplasm. In terms of biological role, facilitates the functional incorporation of the urease nickel metallocenter. This process requires GTP hydrolysis, probably effectuated by UreG. The chain is Urease accessory protein UreG from Staphylococcus aureus (strain Mu3 / ATCC 700698).